The chain runs to 314 residues: Transmembrane protein 248 (314 aa).

The helical transmembrane segment at V21 to F41 threads the bilayer. Residues L78–D106 form a disordered region. Polar residues predominate over residues N80–Q102. 3 helical membrane passes run Q179–V199, F236–V258, and L270–I290.

Belongs to the TMEM248 family.

It is found in the membrane. The sequence is that of Transmembrane protein 248 (TMEM248) from Homo sapiens (Human).